Reading from the N-terminus, the 457-residue chain is Cysteine--tRNA ligase (457 aa).

Zn(2+) is bound at residue C27. The 'HIGH' region motif lies at P29 to N39. The Zn(2+) site is built by C211, H236, and E240. A 'KMSKS' region motif is present at residues K269 to S273. K272 is an ATP binding site.

This sequence belongs to the class-I aminoacyl-tRNA synthetase family. In terms of assembly, monomer. Requires Zn(2+) as cofactor.

It localises to the cytoplasm. The catalysed reaction is tRNA(Cys) + L-cysteine + ATP = L-cysteinyl-tRNA(Cys) + AMP + diphosphate. The sequence is that of Cysteine--tRNA ligase from Ehrlichia ruminantium (strain Welgevonden).